The sequence spans 371 residues: uncharacterized protein (371 aa).

The interval 339–371 (KVTHEDLVKNRPRSPVRPPIPATAKTPDLPERH) is disordered.

This is an uncharacterized protein from Escherichia coli (strain K12).